The chain runs to 385 residues: FK506-binding protein 5 (385 aa).

One can recognise a PPIase FKBP-type domain in the interval 26 to 115 (TNFVSVHYDA…RFEVELIGFW (90 aa)). 3 TPR repeats span residues 128 to 161 (AEKKKNEGNALFKLDAIESALFAYRKGREYIQDL), 177 to 210 (VSIQLNIGACHLKLKHYDHAIEVCQKALDRDMTK), and 211 to 244 (IKAYYRIGQAYMEKGDYESSLTFIRIGLETAIGL).

It catalyses the reaction [protein]-peptidylproline (omega=180) = [protein]-peptidylproline (omega=0). With respect to regulation, inhibited by both FK506 and rapamycin. Its function is as follows. PPIases accelerate the folding of proteins. It catalyzes the cis-trans isomerization of proline imidic peptide bonds in oligopeptides. The chain is FK506-binding protein 5 (FKBP5) from Rhizopus delemar (strain RA 99-880 / ATCC MYA-4621 / FGSC 9543 / NRRL 43880) (Mucormycosis agent).